The chain runs to 504 residues: ATP synthase subunit alpha (504 aa).

Residue 170–177 coordinates ATP; the sequence is GDRQTGKT.

It belongs to the ATPase alpha/beta chains family. In terms of assembly, F-type ATPases have 2 components, CF(1) - the catalytic core - and CF(0) - the membrane proton channel. CF(1) has five subunits: alpha(3), beta(3), gamma(1), delta(1), epsilon(1). CF(0) has three main subunits: a(1), b(2) and c(9-12). The alpha and beta chains form an alternating ring which encloses part of the gamma chain. CF(1) is attached to CF(0) by a central stalk formed by the gamma and epsilon chains, while a peripheral stalk is formed by the delta and b chains.

It localises to the cell membrane. It carries out the reaction ATP + H2O + 4 H(+)(in) = ADP + phosphate + 5 H(+)(out). Its function is as follows. Produces ATP from ADP in the presence of a proton gradient across the membrane. The alpha chain is a regulatory subunit. The polypeptide is ATP synthase subunit alpha (Shouchella clausii (strain KSM-K16) (Alkalihalobacillus clausii)).